A 96-amino-acid chain; its full sequence is uncharacterized protein (96 aa).

A helical transmembrane segment spans residues 1-21 (MSDFEIIVGISSLLQVIILNI).

The protein localises to the membrane. This is an uncharacterized protein from Saccharomyces cerevisiae (strain ATCC 204508 / S288c) (Baker's yeast).